A 193-amino-acid chain; its full sequence is Tetrahydromethanopterin S-methyltransferase subunit A 2 (193 aa).

The Cytoplasmic segment spans residues 1 to 38 (MADKKPTAENWPVVSGDYIVGDPESPVAVTTLASHNED). The chain crosses the membrane as a helical span at residues 39–58 (IPAAAGAAIAGPCKTENLGI). Topologically, residues 59–193 (EKVVANIISN…SESEKIESEA (135 aa)) are extracellular. Residue His84 coordinates 5-hydroxybenzimidazolylcob(I)amide. The interval 174–193 (SKKSSFVESSSESEKIESEA) is disordered.

Belongs to the MtrA family. In terms of assembly, the complex is composed of 8 subunits; MtrA, MtrB, MtrC, MtrD, MtrE, MtrF, MtrG and MtrH. The cofactor is 5-hydroxybenzimidazolylcob(I)amide.

The protein localises to the cell membrane. The catalysed reaction is 5-methyl-5,6,7,8-tetrahydromethanopterin + coenzyme M + 2 Na(+)(in) = 5,6,7,8-tetrahydromethanopterin + methyl-coenzyme M + 2 Na(+)(out). Its pathway is one-carbon metabolism; methanogenesis from CO(2); methyl-coenzyme M from 5,10-methylene-5,6,7,8-tetrahydromethanopterin: step 2/2. Part of a complex that catalyzes the formation of methyl-coenzyme M and tetrahydromethanopterin from coenzyme M and methyl-tetrahydromethanopterin. This is an energy-conserving, sodium-ion translocating step. This Methanobrevibacter ruminantium (strain ATCC 35063 / DSM 1093 / JCM 13430 / OCM 146 / M1) (Methanobacterium ruminantium) protein is Tetrahydromethanopterin S-methyltransferase subunit A 2.